A 40-amino-acid chain; its full sequence is Toxin CSTX-17 (40 aa).

Disulfide bonds link Cys2/Cys17, Cys9/Cys22, Cys16/Cys33, and Cys24/Cys31. Position 40 is a tryptophan amide (Trp40).

In terms of processing, contains 4 disulfide bonds. Expressed by the venom gland.

The protein localises to the secreted. The sequence is that of Toxin CSTX-17 from Cupiennius salei (American wandering spider).